The sequence spans 251 residues: Transcription factor bHLH144 (251 aa).

3 disordered regions span residues 1–20 (MQNNQFPHFSDEVGDRNMHN), 130–161 (YEENDDNEGEEDGGDSEEVSTARTSSRDYGNT), and 173–202 (NNNNNNNSRKQSLSGSASSSNNDGKGRKKM). A compositionally biased stretch (basic and acidic residues) spans 9 to 18 (FSDEVGDRNM). A compositionally biased stretch (acidic residues) spans 130–147 (YEENDDNEGEEDGGDSEE). The span at 148–161 (VSTARTSSRDYGNT) shows a compositional bias: polar residues. Over residues 173–192 (NNNNNNNSRKQSLSGSASSS) the composition is skewed to low complexity. Residues 186–235 (SGSASSSNNDGKGRKKMKKMMGVLRRIVPGGEQMNTACVLDEAVQYLKSL) enclose the bHLH domain.

Homodimer. Interacts with LHW.

The protein localises to the nucleus. This chain is Transcription factor bHLH144 (BHLH144), found in Arabidopsis thaliana (Mouse-ear cress).